Consider the following 1465-residue polypeptide: Ankyrin and armadillo repeat-containing protein (1465 aa).

A helical transmembrane segment spans residues 313–329 (MGYLKLICFLIPFLLSL). 5 ANK repeats span residues 532–561 (AGYA…NVNQ), 582–611 (NGPT…DYTL), 615–644 (RGWM…SLLE), 651–680 (NQCT…NWRK), and 684–714 (KGNN…ELPV). ARM repeat units lie at residues 745–784 (DRYW…NIST), 786–825 (VSIV…DVAK), 827–865 (ENKD…VLCM), 868–907 (ESNQ…EVAR), 910–949 (KEVQ…SLAN), and 1085–1125 (PMSQ…CIVL). The segment at 1431–1465 (KLGKDEQKANPDPPAFLNKLGKDEQNANPDPAESQ) is disordered.

The protein localises to the membrane. The sequence is that of Ankyrin and armadillo repeat-containing protein (Ankar) from Mus musculus (Mouse).